Here is a 284-residue protein sequence, read N- to C-terminus: Acetyl-coenzyme A carboxylase carboxyl transferase subunit beta (284 aa).

Positions 25–284 (LWVKCPETGA…LCKILTKSVQ (260 aa)) constitute a CoA carboxyltransferase N-terminal domain.

Belongs to the AccD/PCCB family. In terms of assembly, acetyl-CoA carboxylase is a heterohexamer composed of biotin carboxyl carrier protein (AccB), biotin carboxylase (AccC) and two subunits each of ACCase subunit alpha (AccA) and ACCase subunit beta (AccD).

The protein localises to the cytoplasm. It carries out the reaction N(6)-carboxybiotinyl-L-lysyl-[protein] + acetyl-CoA = N(6)-biotinyl-L-lysyl-[protein] + malonyl-CoA. It participates in lipid metabolism; malonyl-CoA biosynthesis; malonyl-CoA from acetyl-CoA: step 1/1. Its function is as follows. Component of the acetyl coenzyme A carboxylase (ACC) complex. Biotin carboxylase (BC) catalyzes the carboxylation of biotin on its carrier protein (BCCP) and then the CO(2) group is transferred by the transcarboxylase to acetyl-CoA to form malonyl-CoA. This chain is Acetyl-coenzyme A carboxylase carboxyl transferase subunit beta, found in Liberibacter asiaticus (strain psy62).